Reading from the N-terminus, the 233-residue chain is ATP synthase subunit a 2 (233 aa).

The next 5 helical transmembrane spans lie at 15-35 (FVVI…LVIG), 78-98 (YLAF…LTVV), 107-127 (SLST…IYGI), 169-189 (IMSG…FVPV), and 194-214 (LGLV…LVYI).

It belongs to the ATPase A chain family. F-type ATPases have 2 components, CF(1) - the catalytic core - and CF(0) - the membrane proton channel. CF(1) has five subunits: alpha(3), beta(3), gamma(1), delta(1), epsilon(1). CF(0) has four main subunits: a, b, b' and c.

The protein resides in the cellular thylakoid membrane. Key component of the proton channel; it plays a direct role in the translocation of protons across the membrane. The polypeptide is ATP synthase subunit a 2 (Picosynechococcus sp. (strain ATCC 27264 / PCC 7002 / PR-6) (Agmenellum quadruplicatum)).